Consider the following 380-residue polypeptide: ATP phosphoribosyltransferase regulatory subunit (380 aa).

Belongs to the class-II aminoacyl-tRNA synthetase family. HisZ subfamily. As to quaternary structure, heteromultimer composed of HisG and HisZ subunits.

The protein resides in the cytoplasm. The protein operates within amino-acid biosynthesis; L-histidine biosynthesis; L-histidine from 5-phospho-alpha-D-ribose 1-diphosphate: step 1/9. Required for the first step of histidine biosynthesis. May allow the feedback regulation of ATP phosphoribosyltransferase activity by histidine. The polypeptide is ATP phosphoribosyltransferase regulatory subunit (Thermoanaerobacter pseudethanolicus (strain ATCC 33223 / 39E) (Clostridium thermohydrosulfuricum)).